The primary structure comprises 239 residues: Phosphoribosylaminoimidazole-succinocarboxamide synthase (239 aa).

Belongs to the SAICAR synthetase family.

The enzyme catalyses 5-amino-1-(5-phospho-D-ribosyl)imidazole-4-carboxylate + L-aspartate + ATP = (2S)-2-[5-amino-1-(5-phospho-beta-D-ribosyl)imidazole-4-carboxamido]succinate + ADP + phosphate + 2 H(+). It functions in the pathway purine metabolism; IMP biosynthesis via de novo pathway; 5-amino-1-(5-phospho-D-ribosyl)imidazole-4-carboxamide from 5-amino-1-(5-phospho-D-ribosyl)imidazole-4-carboxylate: step 1/2. This is Phosphoribosylaminoimidazole-succinocarboxamide synthase from Shouchella clausii (strain KSM-K16) (Alkalihalobacillus clausii).